The sequence spans 221 residues: Glutathione peroxidase 6 (221 aa).

Residues 1-19 form the signal peptide; sequence MTQQFWGPCLFSLFMAVLA. C73 is an active-site residue.

Belongs to the glutathione peroxidase family. In terms of tissue distribution, expressed in the Bowman glands.

It is found in the secreted. The catalysed reaction is 2 glutathione + H2O2 = glutathione disulfide + 2 H2O. The polypeptide is Glutathione peroxidase 6 (Gpx6) (Rattus norvegicus (Rat)).